Consider the following 312-residue polypeptide: Putative S-adenosyl-L-methionine-dependent methyltransferase Mkms_0097 (312 aa).

Residues aspartate 134 and 163–164 (DL) contribute to the S-adenosyl-L-methionine site.

It belongs to the UPF0677 family.

In terms of biological role, exhibits S-adenosyl-L-methionine-dependent methyltransferase activity. The chain is Putative S-adenosyl-L-methionine-dependent methyltransferase Mkms_0097 from Mycobacterium sp. (strain KMS).